Reading from the N-terminus, the 279-residue chain is Large ribosomal subunit protein uL2 (279 aa).

The disordered stretch occupies residues 222–279; it reads GMAMNPVDHPMGGGEGKSKSGGGRRHPKSPWGQLAKGLKTRNKKKASQKLIVRGRNAK. Gly residues predominate over residues 232–242; it reads MGGGEGKSKSG. Basic residues predominate over residues 259–268; it reads LKTRNKKKAS.

The protein belongs to the universal ribosomal protein uL2 family. In terms of assembly, part of the 50S ribosomal subunit. Forms a bridge to the 30S subunit in the 70S ribosome.

Its function is as follows. One of the primary rRNA binding proteins. Required for association of the 30S and 50S subunits to form the 70S ribosome, for tRNA binding and peptide bond formation. It has been suggested to have peptidyltransferase activity; this is somewhat controversial. Makes several contacts with the 16S rRNA in the 70S ribosome. In Chlorobium phaeobacteroides (strain DSM 266 / SMG 266 / 2430), this protein is Large ribosomal subunit protein uL2.